The following is a 53-amino-acid chain: Large ribosomal subunit protein bL32c (53 aa).

This sequence belongs to the bacterial ribosomal protein bL32 family.

The protein localises to the plastid. It localises to the chloroplast. The sequence is that of Large ribosomal subunit protein bL32c from Glycine max (Soybean).